We begin with the raw amino-acid sequence, 91 residues long: Alpha-latrotoxin associated low molecular weight protein SGV150-311 (91 aa).

The signal sequence occupies residues 1-18 (MNVLHFLILLMSVVSVFC).

The protein belongs to the arthropod CHH/MIH/GIH/VIH hormone family. Expressed by the venom gland.

Its subcellular location is the secreted. Functionally, may increase the toxicity of alpha-latrotoxin and/or other venom components. Is non-toxic to mice and to the cockroach Periplaneta americana. The polypeptide is Alpha-latrotoxin associated low molecular weight protein SGV150-311 (Steatoda grossa (False black widow)).